The following is a 518-amino-acid chain: Putative cytochrome P450 CYP13A6 (518 aa).

Position 463 (Cys463) interacts with heme.

It belongs to the cytochrome P450 family. Requires heme as cofactor.

Its function is as follows. Cytochromes P450 are a group of heme-thiolate monooxygenases. They oxidize a variety of structurally unrelated compounds, including steroids, fatty acids, and xenobiotics. The sequence is that of Putative cytochrome P450 CYP13A6 (cyp-13A6) from Caenorhabditis elegans.